Here is a 57-residue protein sequence, read N- to C-terminus: Protein GnsA (57 aa).

Belongs to the gns family.

In Escherichia coli O6:H1 (strain CFT073 / ATCC 700928 / UPEC), this protein is Protein GnsA (gnsA).